Here is a 39-residue protein sequence, read N- to C-terminus: Photosystem I reaction center subunit IX (39 aa).

The chain crosses the membrane as a helical span at residues 7-27; that stretch reads FLTTAPVAFILFSSFVFALFI.

The protein belongs to the PsaJ family.

It localises to the cellular thylakoid membrane. Functionally, may help in the organization of the PsaE and PsaF subunits. The sequence is that of Photosystem I reaction center subunit IX from Synechococcus sp. (strain JA-2-3B'a(2-13)) (Cyanobacteria bacterium Yellowstone B-Prime).